Here is a 667-residue protein sequence, read N- to C-terminus: DNA ligase (667 aa).

NAD(+) is bound by residues 32 to 36 (DSEYD), 81 to 82 (SL), and Glu-110. The active-site N6-AMP-lysine intermediate is Lys-112. Residues Arg-133, Glu-167, Lys-283, and Lys-307 each coordinate NAD(+). 4 residues coordinate Zn(2+): Cys-401, Cys-404, Cys-419, and Cys-424. The 82-residue stretch at 586-667 (EGHPEFSGKT…FVDKQNELNS (82 aa)) folds into the BRCT domain.

Belongs to the NAD-dependent DNA ligase family. LigA subfamily. Mg(2+) is required as a cofactor. It depends on Mn(2+) as a cofactor.

The catalysed reaction is NAD(+) + (deoxyribonucleotide)n-3'-hydroxyl + 5'-phospho-(deoxyribonucleotide)m = (deoxyribonucleotide)n+m + AMP + beta-nicotinamide D-nucleotide.. DNA ligase that catalyzes the formation of phosphodiester linkages between 5'-phosphoryl and 3'-hydroxyl groups in double-stranded DNA using NAD as a coenzyme and as the energy source for the reaction. It is essential for DNA replication and repair of damaged DNA. In Staphylococcus aureus (strain bovine RF122 / ET3-1), this protein is DNA ligase.